Here is a 1233-residue protein sequence, read N- to C-terminus: MGTRAFSHDSIFIPDGGAESEQTVQAMSQDNILGKVKTLQQQLGKNIKFGQRSPNAIPMNKANSGEASLEEDLFLTSPMEIVTQQDIVLSDAENKSSDTPSSLSPLNLPGAGSEMEEKVAPVKPSRPKRHFSSAGTIESVNLDAIPLAIARLDNSAAKHKLAVKPKKQRVSKKHRRLAQDPQHEQGGLESRPCLDQNGHPGEDKPTWHEEEPNPLDSEEERRRQEDYWRELEAKCKRQKAEAAEKRRLEEQRLQALERRLWEENRRQELLEEEGEGQEPPLEAERAPREEQQRSLEAPGWEDAERREREERERLEAEEERRRLQAQAQAEERRRLEEDARLEERRRQEEEEGRCAEELKRQEEEEAEGWEELEQQEAEVQGPPEALEETGEGRRGAEEEDLGEEEEEGQAHLEDWRGQLSELLNDFEERLEDQERLKPEGQREHSEEPGICEEQNPEAERRREQQGRSGDFQGADRPGPEEKREEGDTEPLLKQEGPVEAAQPPVERKEAAALEQGRKVEELRWQEVDERQTMPRPYTFQVSSGGKQILFPKVNLSPVTPAKDTGLTAAPQEPKAPKASPVQHALPSSLSVPHTAILVTGAQLCGPAVNLSQIKDTACKSLLGLEEKKHAEAPAGENPPRGPGDARAGSGKAKPRQESPSSASALAEWASIRSRILKNAESDPRSSERDQLRPGDESTPRGRCDSRGNQRKTPPVNAKFSIMPAWQKFSDGGTETSKQSTEAESIRKRPMLGPSEETAPQPPPAGVRELGKGPEKSEMHREPADTTEGCKFAKDLPSFLVPSLPYPPQKVVAHTEFTTSSDSETANGIAKPDPVMPGGEEKASPFGIKLRRTNYSLRFNCDQQAEQKKKKRHSSTGDSADAGPPAAGSARGEKEMEGVALKHGPSLPQERKQAPSTRRDSAEPSSSRSVPVAHPGPPPASSQTPAPEHDKAANKMPLAQKPALAPKPTSQTPPASPLSKLSRPYLVELLSRRAGRPDPEPSEPSKEDQESSDRRPPSPPGPEERKGQKRDEEEEATERKPASPPLPATQQEKPSQTPEAGRKEKPMLQSRHSLDGSKLTEKVETAQPLWITLALQKQKGFREQQATREERKQAREAKQAEKLSKENVSVSVQPGSSSVSRAGSLHKSTALPEEKRPETAVSRLERREQLKKANTLPTSVTVEISDSAPPAPLVKEVTKRFSTPDAAPVSTEPAWLALAKRKAKAWSDCPQIIK.

Phosphoserine occurs at positions 7, 28, and 132. Disordered stretches follow at residues 92–136 (AENK…SAGT), 157–224 (AKHK…RRRQ), and 269–527 (LLEE…WQEV). The segment covering 157–176 (AKHKLAVKPKKQRVSKKHRR) has biased composition (basic residues). Composition is skewed to basic and acidic residues over residues 200 to 211 (PGEDKPTWHEEE), 282 to 293 (EAERAPREEQQR), 302 to 322 (DAERREREERERLEAEEERRR), and 329 to 362 (AEERRRLEEDARLEERRRQEEEEGRCAEELKRQE). The required for interaction with actin-capping proteins stretch occupies residues 321–472 (RRLQAQAQAE…EQQGRSGDFQ (152 aa)). Acidic residues-rich tracts occupy residues 363-376 (EEEAEGWEELEQQE) and 397-407 (EEEDLGEEEEE). Ser420 is subject to Phosphoserine. Composition is skewed to basic and acidic residues over residues 432 to 447 (DQERLKPEGQREHSEE) and 505 to 527 (VERKEAAALEQGRKVEELRWQEV). Ser556 bears the Phosphoserine mark. Thr559 is subject to Phosphothreonine. 4 disordered regions span residues 560–586 (PAKDTGLTAAPQEPKAPKASPVQHALP), 629–788 (HAEA…TTEG), 815–1082 (EFTT…TEKV), and 1097–1186 (QKGF…ISDS). Basic and acidic residues predominate over residues 677–707 (KNAESDPRSSERDQLRPGDESTPRGRCDSRG). Polar residues predominate over residues 732 to 742 (GTETSKQSTEA). Residues 768 to 783 (ELGKGPEKSEMHREPA) show a composition bias toward basic and acidic residues. Composition is skewed to polar residues over residues 815–825 (EFTTSSDSETA) and 852–863 (TNYSLRFNCDQQ). Over residues 876-889 (GDSADAGPPAAGSA) the composition is skewed to low complexity. Residues 908–921 (QERKQAPSTRRDSA) are compositionally biased toward basic and acidic residues. Residues 956-967 (PLAQKPALAPKP) are compositionally biased toward low complexity. Thr971 is modified (phosphothreonine). Ser975 and Ser1017 each carry phosphoserine. Positions 994–1040 (GRPDPEPSEPSKEDQESSDRRPPSPPGPEERKGQKRDEEEEATERKP) are enriched in basic and acidic residues. The span at 1047-1057 (ATQQEKPSQTP) shows a compositional bias: polar residues. Composition is skewed to basic and acidic residues over residues 1059 to 1082 (AGRKEKPMLQSRHSLDGSKLTEKV) and 1099 to 1124 (GFREQQATREERKQAREAKQAEKLSK). The span at 1127–1139 (VSVSVQPGSSSVS) shows a compositional bias: low complexity. A compositionally biased stretch (basic and acidic residues) spans 1151-1170 (PEEKRPETAVSRLERREQLK). The segment covering 1174–1183 (TLPTSVTVEI) has biased composition (polar residues).

In terms of assembly, directly interacts with actin-capping proteins CAPZA1, CAPZA2 and CAPZB; this interaction decreases the binding of capping proteins to actin. Expressed in intestinal epithelial cells (at protein level).

The protein resides in the cytoplasm. It localises to the cytosol. Its function is as follows. Involved in epithelial cell integrity by acting on the maintenance of the actin cytoskeleton. Positively regulates the actin polymerization, by inhibiting the interaction of actin-capping proteins with actin. The chain is Capping protein-inhibiting regulator of actin dynamics from Homo sapiens (Human).